Reading from the N-terminus, the 218-residue chain is MNQADNSTVIIDTGCANLSSVRYAFERICSDVIVSDNHDLIKAATRVVLPGVGTAGAAMASLKDKSLVGLIQGLTQPVLGVCLGMQMMTQVSKEHGGRDIDCECLGLIPTDVEELNSQGQPLPHMGWNQISPSMHPLFAGIPAGSYLYFVHSYRVPLSDYTIASCEYGETFSAAIAKDNFMGVQFHPEKSAAIGSKILSNFLALDKASLDAALQEPKS.

A Glutamine amidotransferase type-1 domain is found at 7 to 211 (STVIIDTGCA…LALDKASLDA (205 aa)). Cysteine 82 functions as the Nucleophile in the catalytic mechanism. Catalysis depends on residues histidine 186 and glutamate 188.

In terms of assembly, heterodimer of HisH and HisF.

Its subcellular location is the cytoplasm. It catalyses the reaction 5-[(5-phospho-1-deoxy-D-ribulos-1-ylimino)methylamino]-1-(5-phospho-beta-D-ribosyl)imidazole-4-carboxamide + L-glutamine = D-erythro-1-(imidazol-4-yl)glycerol 3-phosphate + 5-amino-1-(5-phospho-beta-D-ribosyl)imidazole-4-carboxamide + L-glutamate + H(+). The catalysed reaction is L-glutamine + H2O = L-glutamate + NH4(+). Its pathway is amino-acid biosynthesis; L-histidine biosynthesis; L-histidine from 5-phospho-alpha-D-ribose 1-diphosphate: step 5/9. In terms of biological role, IGPS catalyzes the conversion of PRFAR and glutamine to IGP, AICAR and glutamate. The HisH subunit catalyzes the hydrolysis of glutamine to glutamate and ammonia as part of the synthesis of IGP and AICAR. The resulting ammonia molecule is channeled to the active site of HisF. In Shewanella sediminis (strain HAW-EB3), this protein is Imidazole glycerol phosphate synthase subunit HisH.